A 502-amino-acid chain; its full sequence is Probable cytosol aminopeptidase 2 (502 aa).

Mn(2+)-binding residues include K269 and D274. K281 is a catalytic residue. Mn(2+) is bound by residues D292, D351, and E353. R355 is an active-site residue.

Belongs to the peptidase M17 family. Mn(2+) is required as a cofactor.

It localises to the cytoplasm. The catalysed reaction is Release of an N-terminal amino acid, Xaa-|-Yaa-, in which Xaa is preferably Leu, but may be other amino acids including Pro although not Arg or Lys, and Yaa may be Pro. Amino acid amides and methyl esters are also readily hydrolyzed, but rates on arylamides are exceedingly low.. The enzyme catalyses Release of an N-terminal amino acid, preferentially leucine, but not glutamic or aspartic acids.. In terms of biological role, presumably involved in the processing and regular turnover of intracellular proteins. Catalyzes the removal of unsubstituted N-terminal amino acids from various peptides. This Shewanella oneidensis (strain ATCC 700550 / JCM 31522 / CIP 106686 / LMG 19005 / NCIMB 14063 / MR-1) protein is Probable cytosol aminopeptidase 2 (pepA2).